A 119-amino-acid chain; its full sequence is Achromolysin (119 aa).

This sequence belongs to the peptidase M4 family. Requires Ca(2+) as cofactor. Zn(2+) serves as cofactor.

It localises to the secreted. Has staphylolytic activity. In Achromobacter lyticus, this protein is Achromolysin.